A 214-amino-acid chain; its full sequence is Adenylate kinase (214 aa).

An ATP-binding site is contributed by 10-15 (GAGKGT). The interval 30–59 (STGDMLRAAIKEGTPLGLEAKKVMDAGQLI) is NMP. AMP contacts are provided by residues Thr31, Arg36, 57–59 (QLI), 85–88 (GFPR), and Gln92. The interval 122–159 (GRRVHPGSGRVYHVVYNPPKVADKDNETGEELIIRADD) is LID. ATP-binding positions include Arg123 and 132 to 133 (VY). Positions 156 and 167 each coordinate AMP. Gln200 serves as a coordination point for ATP.

It belongs to the adenylate kinase family. In terms of assembly, monomer.

It is found in the cytoplasm. The enzyme catalyses AMP + ATP = 2 ADP. It functions in the pathway purine metabolism; AMP biosynthesis via salvage pathway; AMP from ADP: step 1/1. Its function is as follows. Catalyzes the reversible transfer of the terminal phosphate group between ATP and AMP. Plays an important role in cellular energy homeostasis and in adenine nucleotide metabolism. This chain is Adenylate kinase, found in Pseudoalteromonas translucida (strain TAC 125).